The primary structure comprises 199 residues: Large ribosomal subunit protein bL25 (199 aa).

This sequence belongs to the bacterial ribosomal protein bL25 family. CTC subfamily. As to quaternary structure, part of the 50S ribosomal subunit; part of the 5S rRNA/L5/L18/L25 subcomplex. Contacts the 5S rRNA. Binds to the 5S rRNA independently of L5 and L18.

This is one of the proteins that binds to the 5S RNA in the ribosome where it forms part of the central protuberance. The chain is Large ribosomal subunit protein bL25 from Pelobacter propionicus (strain DSM 2379 / NBRC 103807 / OttBd1).